The following is a 307-amino-acid chain: Glycine--tRNA ligase alpha subunit (307 aa).

It belongs to the class-II aminoacyl-tRNA synthetase family. In terms of assembly, tetramer of two alpha and two beta subunits.

It localises to the cytoplasm. It catalyses the reaction tRNA(Gly) + glycine + ATP = glycyl-tRNA(Gly) + AMP + diphosphate. This is Glycine--tRNA ligase alpha subunit from Aeromonas hydrophila subsp. hydrophila (strain ATCC 7966 / DSM 30187 / BCRC 13018 / CCUG 14551 / JCM 1027 / KCTC 2358 / NCIMB 9240 / NCTC 8049).